A 317-amino-acid polypeptide reads, in one-letter code: Ret finger protein-like 1 (317 aa).

The segment at 40 to 82 adopts an RING-type zinc-finger fold; sequence CPVCSDYLEKPMSLECGCAVCFKCINSLQKEPHGEDLLCCCCS. Positions 107–301 constitute a B30.2/SPRY domain; sequence EPKLKKILQM…DKSVLSICPV (195 aa).

Phosphorylated by PKC and CDK1. The antiproliferative effect seems to be positively regulated by PKC phosphorylation and negatively by CDK1 phosphorylation. In terms of tissue distribution, seems to be expressed in prostate and less abundantly in adult brain, fetal liver, and fetal kidney.

It is found in the cytoplasm. It localises to the nucleus. Negatively regulates the G2-M phase transition, possibly by promoting cyclin B1/CCNB1 and CDK1 proteasomal degradation and thereby preventing their accumulation during interphase. The chain is Ret finger protein-like 1 (RFPL1) from Homo sapiens (Human).